Reading from the N-terminus, the 227-residue chain is Cytochrome c oxidase subunit 2 (227 aa).

The Mitochondrial intermembrane portion of the chain corresponds to 1-14 (MAYPFQLGLQDATS). Residues 15–45 (PIMEELMNFHDHTLMIVFLISSLVLYIISLM) form a helical membrane-spanning segment. At 46–59 (LTTKLTHTSTMDAQ) the chain is on the mitochondrial matrix side. The chain crosses the membrane as a helical span at residues 60 to 87 (EVETIWTILPAAILILIALPSLRILYMM). The Mitochondrial intermembrane portion of the chain corresponds to 88-227 (DEINNPVLTV…YFENWSASMI (140 aa)). H161, C196, E198, C200, H204, and M207 together coordinate Cu cation. E198 provides a ligand contact to Mg(2+).

Belongs to the cytochrome c oxidase subunit 2 family. As to quaternary structure, component of the cytochrome c oxidase (complex IV, CIV), a multisubunit enzyme composed of 14 subunits. The complex is composed of a catalytic core of 3 subunits MT-CO1, MT-CO2 and MT-CO3, encoded in the mitochondrial DNA, and 11 supernumerary subunits COX4I, COX5A, COX5B, COX6A, COX6B, COX6C, COX7A, COX7B, COX7C, COX8 and NDUFA4, which are encoded in the nuclear genome. The complex exists as a monomer or a dimer and forms supercomplexes (SCs) in the inner mitochondrial membrane with NADH-ubiquinone oxidoreductase (complex I, CI) and ubiquinol-cytochrome c oxidoreductase (cytochrome b-c1 complex, complex III, CIII), resulting in different assemblies (supercomplex SCI(1)III(2)IV(1) and megacomplex MCI(2)III(2)IV(2)). Found in a complex with TMEM177, COA6, COX18, COX20, SCO1 and SCO2. Interacts with TMEM177 in a COX20-dependent manner. Interacts with COX20. Interacts with COX16. The cofactor is Cu cation.

The protein resides in the mitochondrion inner membrane. The catalysed reaction is 4 Fe(II)-[cytochrome c] + O2 + 8 H(+)(in) = 4 Fe(III)-[cytochrome c] + 2 H2O + 4 H(+)(out). Functionally, component of the cytochrome c oxidase, the last enzyme in the mitochondrial electron transport chain which drives oxidative phosphorylation. The respiratory chain contains 3 multisubunit complexes succinate dehydrogenase (complex II, CII), ubiquinol-cytochrome c oxidoreductase (cytochrome b-c1 complex, complex III, CIII) and cytochrome c oxidase (complex IV, CIV), that cooperate to transfer electrons derived from NADH and succinate to molecular oxygen, creating an electrochemical gradient over the inner membrane that drives transmembrane transport and the ATP synthase. Cytochrome c oxidase is the component of the respiratory chain that catalyzes the reduction of oxygen to water. Electrons originating from reduced cytochrome c in the intermembrane space (IMS) are transferred via the dinuclear copper A center (CU(A)) of subunit 2 and heme A of subunit 1 to the active site in subunit 1, a binuclear center (BNC) formed by heme A3 and copper B (CU(B)). The BNC reduces molecular oxygen to 2 water molecules using 4 electrons from cytochrome c in the IMS and 4 protons from the mitochondrial matrix. The polypeptide is Cytochrome c oxidase subunit 2 (MT-CO2) (Leggadina forresti (Forrest's mouse)).